The primary structure comprises 100 residues: Urease subunit gamma (100 aa).

This sequence belongs to the urease gamma subunit family. As to quaternary structure, heterotrimer of UreA (gamma), UreB (beta) and UreC (alpha) subunits. Three heterotrimers associate to form the active enzyme.

It is found in the cytoplasm. It catalyses the reaction urea + 2 H2O + H(+) = hydrogencarbonate + 2 NH4(+). Its pathway is nitrogen metabolism; urea degradation; CO(2) and NH(3) from urea (urease route): step 1/1. This is Urease subunit gamma from Micrococcus luteus (strain ATCC 4698 / DSM 20030 / JCM 1464 / CCM 169 / CCUG 5858 / IAM 1056 / NBRC 3333 / NCIMB 9278 / NCTC 2665 / VKM Ac-2230) (Micrococcus lysodeikticus).